The chain runs to 337 residues: Glycerol-3-phosphate dehydrogenase [NAD(P)+] (337 aa).

2 residues coordinate NADPH: Trp12 and Lys107. Residues Lys107, Gly138, and Thr140 each contribute to the sn-glycerol 3-phosphate site. An NADPH-binding site is contributed by Ala142. Lys193, Asp246, Ser256, Arg257, and Asn258 together coordinate sn-glycerol 3-phosphate. Catalysis depends on Lys193, which acts as the Proton acceptor. NADPH is bound at residue Arg257. NADPH contacts are provided by Val282 and Glu284.

This sequence belongs to the NAD-dependent glycerol-3-phosphate dehydrogenase family.

The protein localises to the cytoplasm. The enzyme catalyses sn-glycerol 3-phosphate + NAD(+) = dihydroxyacetone phosphate + NADH + H(+). It carries out the reaction sn-glycerol 3-phosphate + NADP(+) = dihydroxyacetone phosphate + NADPH + H(+). Its pathway is membrane lipid metabolism; glycerophospholipid metabolism. Catalyzes the reduction of the glycolytic intermediate dihydroxyacetone phosphate (DHAP) to sn-glycerol 3-phosphate (G3P), the key precursor for phospholipid synthesis. The chain is Glycerol-3-phosphate dehydrogenase [NAD(P)+] from Koribacter versatilis (strain Ellin345).